A 304-amino-acid chain; its full sequence is tRNA-uridine aminocarboxypropyltransferase 1 (304 aa).

Positions 1–30 (MALSPSVVPQESEENNANCVETKQSQTAST) are disordered. Positions 15–30 (NNANCVETKQSQTAST) are enriched in polar residues. A DXTW motif is present at residues 206–209 (DSTW).

The protein belongs to the TDD superfamily. DTWD1 family.

It localises to the nucleus. The catalysed reaction is a uridine in tRNA + S-adenosyl-L-methionine = a 3-[(3S)-3-amino-3-carboxypropyl]uridine in tRNA + S-methyl-5'-thioadenosine + H(+). Functionally, catalyzes the formation of 3-(3-amino-3-carboxypropyl)uridine (acp3U) at position 20 in the D-loop of several cytoplasmic tRNAs (acp3U(20)). This is tRNA-uridine aminocarboxypropyltransferase 1 from Rattus norvegicus (Rat).